We begin with the raw amino-acid sequence, 693 residues long: MARKISLDMTRNVGIMAHIDAGKTTTTERILFYTGVERKLKEVHEGQATMDWMEQEQERGITITSAATTCFWKGHRINIIDTPGHVDFTVEVERSLRVLDGAVAVFSAVDGVQPQSETVWRQADKYKVPRLAFFNKMDRIGANFDMCVSDIKEKLGSNPVPIQIPIGAEDQFEGVVDLIEMKEIVWPVDSDQGQHFDVKDIRAELKEKAEETRQYMLESIVETDDALMEKFFGGEEITKEEIIKGLRKATIDNTIVPVVCGTAFKNKGIQALLDAIVNYMPAPTDVAMVEGRDPKNPDVLIDREMSDDAPFAALAFKVMTDPFVGRLTFFRVYSGFVEKGATVLNSTKGKKERMGRILQMHANNREEIEHVYCGDIAAAVGLKDTATGDTLCAENAPIVLEQMEFPEPVISVAVEPKTKNDQEKMGIALSKLAEEDPTFKVRTDEETGQTIISGMGELHLEIIVDRMKREFKVESNVGKPQVAYRETITQSCDQEVKYAKQSGGRGQYGHVKIILEPNPGKEFEFVNKITGGVIPREYIPAVEKGCKEALESGVIAGYPLVDVKVTLYDGSYHEVDSSEMAFKIAGSMALKQAATKAKPVILEPVFKVEVTTPEEYMGDIIGDLNSRRGMVSGMIDRNGAKIITAKVPLSEMFGYATDLRSKSQGRATYSWEFSEYLQVPASIQKQIQEERGK.

Residues 8–284 (DMTRNVGIMA…AIVNYMPAPT (277 aa)) enclose the tr-type G domain. GTP-binding positions include 17–24 (AHIDAGKT), 81–85 (DTPGH), and 135–138 (NKMD).

The protein belongs to the TRAFAC class translation factor GTPase superfamily. Classic translation factor GTPase family. EF-G/EF-2 subfamily.

The protein localises to the cytoplasm. Functionally, catalyzes the GTP-dependent ribosomal translocation step during translation elongation. During this step, the ribosome changes from the pre-translocational (PRE) to the post-translocational (POST) state as the newly formed A-site-bound peptidyl-tRNA and P-site-bound deacylated tRNA move to the P and E sites, respectively. Catalyzes the coordinated movement of the two tRNA molecules, the mRNA and conformational changes in the ribosome. This Fusobacterium nucleatum subsp. nucleatum (strain ATCC 25586 / DSM 15643 / BCRC 10681 / CIP 101130 / JCM 8532 / KCTC 2640 / LMG 13131 / VPI 4355) protein is Elongation factor G.